The primary structure comprises 310 residues: Protein BIG GRAIN 1 (310 aa).

Residues 77-140 (SYRARAPGPH…EKKAKKPGAS (64 aa)) are disordered. The segment covering 90 to 106 (SSSSECSSYGGFSSSEA) has biased composition (low complexity).

It belongs to the BIG GRAIN 1 (BG1) plant protein family. Mostly expressed in the vascular tissues of leaves, culms and young panicles, especially in hulls.

It localises to the cell membrane. Its function is as follows. Involved in auxin transport. Positive regulator of the auxin signaling pathway involved in gravitropism, plant growth and grain development. The sequence is that of Protein BIG GRAIN 1 from Oryza sativa subsp. japonica (Rice).